A 251-amino-acid polypeptide reads, in one-letter code: 2-amino-5-chloromuconate deaminase (251 aa).

As to quaternary structure, monomer.

The catalysed reaction is (2Z,4E)-2-aminomuconate + H2O = (2Z,4E)-2-hydroxyhexa-2,4-dienedioate + NH4(+). Its pathway is xenobiotic degradation; 4-chloronitrobenzene degradation. It functions in the pathway xenobiotic degradation; nitrobenzene degradation. Its activity is regulated as follows. Cysteine residue modifying agents such as p-chloromercuribenzoate and the SH-binding metals Zn(2+), Ni(2+) and Cu(2+) completely inhibit deaminase activity, whereas Ca(2+), Mg(2+) and the histidine residue-modifying agent diethyl pyrocarbonate inhibit the activity by 23 to 50%. Its function is as follows. Involved in the biodegradation of xenobiotic compounds, such as nitrobenzene and 4-chloronitrobenzene (4-CNB). CnbZ preferentially catalyzes the deamination of 2-amino-5-chloromuconate (2A5CM) to yield 2-hydroxy-5-chloromuconate (2H5CM). Also able to catalyze the deamination of 2-aminomuconate to yield 2-hydroxymuconate, which spontaneously converts into its keto form, 2-oxalocrotonate. The protein is 2-amino-5-chloromuconate deaminase of Comamonas testosteroni (Pseudomonas testosteroni).